Consider the following 243-residue polypeptide: Ubiquinone/menaquinone biosynthesis C-methyltransferase UbiE (243 aa).

Residues Thr69, Asp90, and 116–117 (DA) contribute to the S-adenosyl-L-methionine site.

It belongs to the class I-like SAM-binding methyltransferase superfamily. MenG/UbiE family.

The enzyme catalyses a 2-demethylmenaquinol + S-adenosyl-L-methionine = a menaquinol + S-adenosyl-L-homocysteine + H(+). It carries out the reaction a 2-methoxy-6-(all-trans-polyprenyl)benzene-1,4-diol + S-adenosyl-L-methionine = a 5-methoxy-2-methyl-3-(all-trans-polyprenyl)benzene-1,4-diol + S-adenosyl-L-homocysteine + H(+). It participates in quinol/quinone metabolism; menaquinone biosynthesis; menaquinol from 1,4-dihydroxy-2-naphthoate: step 2/2. Its pathway is cofactor biosynthesis; ubiquinone biosynthesis. Its function is as follows. Methyltransferase required for the conversion of demethylmenaquinol (DMKH2) to menaquinol (MKH2) and the conversion of 2-polyprenyl-6-methoxy-1,4-benzoquinol (DDMQH2) to 2-polyprenyl-3-methyl-6-methoxy-1,4-benzoquinol (DMQH2). The polypeptide is Ubiquinone/menaquinone biosynthesis C-methyltransferase UbiE (Burkholderia mallei (strain NCTC 10247)).